Reading from the N-terminus, the 124-residue chain is Desulfoferrodoxin homolog (124 aa).

Fe cation is bound by residues Cys10, Cys13, Cys29, Cys30, His49, His69, His75, Cys117, and His120.

It belongs to the desulfoferrodoxin family. It depends on Fe(3+) as a cofactor. Requires Cu(2+) as cofactor.

The polypeptide is Desulfoferrodoxin homolog (Methanothermobacter thermautotrophicus (strain ATCC 29096 / DSM 1053 / JCM 10044 / NBRC 100330 / Delta H) (Methanobacterium thermoautotrophicum)).